Here is a 349-residue protein sequence, read N- to C-terminus: Phenylalanine--tRNA ligase alpha subunit (349 aa).

Glutamate 258 contacts Mg(2+).

It belongs to the class-II aminoacyl-tRNA synthetase family. Phe-tRNA synthetase alpha subunit type 1 subfamily. As to quaternary structure, tetramer of two alpha and two beta subunits. It depends on Mg(2+) as a cofactor.

It localises to the cytoplasm. It catalyses the reaction tRNA(Phe) + L-phenylalanine + ATP = L-phenylalanyl-tRNA(Phe) + AMP + diphosphate + H(+). The protein is Phenylalanine--tRNA ligase alpha subunit of Rickettsia canadensis (strain McKiel).